The primary structure comprises 815 residues: Probable oligoxyloglucan-reducing end-specific xyloglucanase (815 aa).

A signal peptide spans 1–19; it reads MKFWLQQLGLAVLCASSAA. Asp-58 (nucleophile) is an active-site residue. An N-linked (GlcNAc...) asparagine glycan is attached at Asn-113. One copy of the BNR 1 repeat lies at 118–128; the sequence is FVSNDRGATFT. The N-linked (GlcNAc...) asparagine glycan is linked to Asn-180. A BNR 2 repeat occupies 218–228; sequence YYTTDGGKNWE. N-linked (GlcNAc...) asparagine glycans are attached at residues Asn-246, Asn-290, and Asn-304. The stretch at 351–361 is one BNR 3 repeat; the sequence is YLSRDGGKTWK. N-linked (GlcNAc...) asparagine glycosylation occurs at Asn-387. Residue Asp-489 is the Proton donor of the active site. The stretch at 545–555 is one BNR 4 repeat; sequence YSTDGGSEWTK. N-linked (GlcNAc...) asparagine glycosylation is found at Asn-564 and Asn-603. The stretch at 649–658 is one BNR 5 repeat; the sequence is YVSTDGGLSY. The N-linked (GlcNAc...) asparagine glycan is linked to Asn-662. BNR repeat units lie at residues 696-706 and 749-759; these read YHTTDFGKRWK and YRSDDNGSTWD. An N-linked (GlcNAc...) asparagine glycan is attached at Asn-754.

It belongs to the glycosyl hydrolase 74 family.

The protein resides in the secreted. The catalysed reaction is Hydrolysis of cellobiose from the reducing end of xyloglucans consisting of a beta-(1-&gt;4)-linked glucan carrying alpha-D-xylosyl groups on O-6 of the glucose residues. To be a substrate, the first residue must be unsubstituted, the second residue may bear a xylosyl group, whether further glycosylated or not, and the third residue, which becomes the new terminus by the action of the enzyme, is preferably xylosylated, but this xylose residue must not be further substituted.. Functionally, oligoxyloglucan-reducing end-specific xyloglucanase involved in degradation of xyloglucans. Releases the first two glycosyl segments from oligoxyloglucans. Active against cotton xyloglucan, tamarind xyloglucan and tamarind xyloglucan oligomers. This chain is Probable oligoxyloglucan-reducing end-specific xyloglucanase (xgcA), found in Neosartorya fischeri (strain ATCC 1020 / DSM 3700 / CBS 544.65 / FGSC A1164 / JCM 1740 / NRRL 181 / WB 181) (Aspergillus fischerianus).